The following is a 246-amino-acid chain: LexA repressor (246 aa).

The segment at 1–34 (MATPQTGKKTPSRRVSELPDGPPDATGLTPRQQR) is disordered. The H-T-H motif DNA-binding region spans 52–72 (MREIGEAVGLTSSSSVAHQLK). Catalysis depends on for autocatalytic cleavage activity residues Ser170 and Lys207.

This sequence belongs to the peptidase S24 family. As to quaternary structure, homodimer.

It carries out the reaction Hydrolysis of Ala-|-Gly bond in repressor LexA.. In terms of biological role, represses a number of genes involved in the response to DNA damage (SOS response), including recA and lexA. In the presence of single-stranded DNA, RecA interacts with LexA causing an autocatalytic cleavage which disrupts the DNA-binding part of LexA, leading to derepression of the SOS regulon and eventually DNA repair. The chain is LexA repressor from Nocardioides sp. (strain ATCC BAA-499 / JS614).